Reading from the N-terminus, the 662-residue chain is UvrABC system protein B (662 aa).

One can recognise a Helicase ATP-binding domain in the interval 31–188 (DNIEGGEKAQ…NDLVDIQFER (158 aa)). 44–51 (GATGTGKT) serves as a coordination point for ATP. A Beta-hairpin motif is present at residues 97-120 (YYDYYQPEAYVPSSDTYIEKDSSV). One can recognise a Helicase C-terminal domain in the interval 435–601 (QIDDLLGEIN…TIKKEIRDLI (167 aa)). The region spanning 626–661 (KELVKKLEKQMQEAVEVLDFELAAQIRDMMLEVKAL) is the UVR domain.

This sequence belongs to the UvrB family. As to quaternary structure, forms a heterotetramer with UvrA during the search for lesions. Interacts with UvrC in an incision complex.

Its subcellular location is the cytoplasm. Its function is as follows. The UvrABC repair system catalyzes the recognition and processing of DNA lesions. A damage recognition complex composed of 2 UvrA and 2 UvrB subunits scans DNA for abnormalities. Upon binding of the UvrA(2)B(2) complex to a putative damaged site, the DNA wraps around one UvrB monomer. DNA wrap is dependent on ATP binding by UvrB and probably causes local melting of the DNA helix, facilitating insertion of UvrB beta-hairpin between the DNA strands. Then UvrB probes one DNA strand for the presence of a lesion. If a lesion is found the UvrA subunits dissociate and the UvrB-DNA preincision complex is formed. This complex is subsequently bound by UvrC and the second UvrB is released. If no lesion is found, the DNA wraps around the other UvrB subunit that will check the other stand for damage. This is UvrABC system protein B from Streptococcus pneumoniae (strain Taiwan19F-14).